The following is a 418-amino-acid chain: Zinc metalloproteinase-disintegrin-like batroxstatin-2 (418 aa).

The Peptidase M12B domain occupies K10 to P206. Cystine bridges form between C121/C201, C161/C185, and C163/C168. H146 serves as a coordination point for Zn(2+). Residue E147 is part of the active site. Residues H150 and H156 each coordinate Zn(2+). Positions P214–N299 constitute a Disintegrin domain. 6 residues coordinate Ca(2+): V216, N219, F221, E223, E226, and D229. 14 cysteine pairs are disulfide-bonded: C217–C246, C228–C241, C230–C236, C240–C263, C254–C260, C259–C285, C272–C292, C279–C310, C303–C315, C322–C372, C337–C383, C350–C360, C367–C409, and C403–C414. Residues E278–D280 carry the D/ECD-tripeptide motif. Residues D280, M281, D283, D294, and R295 each contribute to the Ca(2+) site. N312 is a glycosylation site (N-linked (GlcNAc...) asparagine).

This sequence belongs to the venom metalloproteinase (M12B) family. P-III subfamily. P-IIIc sub-subfamily. Homodimer; disulfide-linked. Zn(2+) is required as a cofactor. In terms of tissue distribution, expressed by the venom gland.

It localises to the secreted. Its function is as follows. Snake venom zinc metalloprotease that induces apoptosis in vascular endothelial cells (VEC), without degrading the extracellular matrix (it cannot cleave collagen) or inhibiting adhesion of VEC. Has also fibrinogenolytic and hemorrhagic activities. The sequence is that of Zinc metalloproteinase-disintegrin-like batroxstatin-2 from Bothrops atrox (Barba amarilla).